The primary structure comprises 197 residues: MAASPKINRREHILQCLATMLETSPGQRITTAKLAAEVGVSEAALYRHFPSKARMFEGLIDFIEESLLSRINLIMDEEKDTMRRCQLLLQLLLVFAERNPGISRVLNGDALLGENERLRNRTGQIFSKVETHLKQILREKTLREGKGFNLDEAILANLLLAVAEGRIAQFVRSDFKNKPTEHFAEQWQFIQQQLLQS.

One can recognise an HTH tetR-type domain in the interval 7–67; it reads INRREHILQC…GLIDFIEESL (61 aa). A DNA-binding region (H-T-H motif) is located at residues 30–49; it reads TTAKLAAEVGVSEAALYRHF.

This sequence belongs to the nucleoid occlusion factor SlmA family. As to quaternary structure, homodimer. Interacts with FtsZ.

The protein resides in the cytoplasm. It localises to the nucleoid. Functionally, required for nucleoid occlusion (NO) phenomenon, which prevents Z-ring formation and cell division over the nucleoid. Acts as a DNA-associated cell division inhibitor that binds simultaneously chromosomal DNA and FtsZ, and disrupts the assembly of FtsZ polymers. SlmA-DNA-binding sequences (SBS) are dispersed on non-Ter regions of the chromosome, preventing FtsZ polymerization at these regions. The polypeptide is Nucleoid occlusion factor SlmA (Shewanella loihica (strain ATCC BAA-1088 / PV-4)).